The chain runs to 174 residues: Large ribosomal subunit protein uL16 (174 aa).

This sequence belongs to the universal ribosomal protein uL16 family.

This is Large ribosomal subunit protein uL16 from Methanocaldococcus jannaschii (strain ATCC 43067 / DSM 2661 / JAL-1 / JCM 10045 / NBRC 100440) (Methanococcus jannaschii).